The following is a 114-amino-acid chain: Integration host factor subunit alpha (114 aa).

It belongs to the bacterial histone-like protein family. Heterodimer of an alpha and a beta chain.

In terms of biological role, this protein is one of the two subunits of integration host factor, a specific DNA-binding protein that functions in genetic recombination as well as in transcriptional and translational control. This is Integration host factor subunit alpha from Afipia carboxidovorans (strain ATCC 49405 / DSM 1227 / KCTC 32145 / OM5) (Oligotropha carboxidovorans).